The sequence spans 118 residues: uncharacterized protein (118 aa).

The helical transmembrane segment at 7-27 (LLTGLFVGGIIGGAAVLLTAP) threads the bilayer. Residues 31–118 (KQLREKMKTN…IRQLEKTLQN (88 aa)) adopt a coiled-coil conformation.

The protein localises to the cell membrane. This is an uncharacterized protein from Bacillus subtilis (strain 168).